Here is a 271-residue protein sequence, read N- to C-terminus: Mannosyl-3-phosphoglycerate phosphatase (271 aa).

The active-site Nucleophile is aspartate 13. Mg(2+) contacts are provided by aspartate 13, aspartate 15, and aspartate 214.

Belongs to the HAD-like hydrolase superfamily. MPGP family. It depends on Mg(2+) as a cofactor.

The protein resides in the cytoplasm. The catalysed reaction is 2-O-(alpha-D-mannosyl)-3-phosphoglycerate + H2O = (2R)-2-O-(alpha-D-mannosyl)-glycerate + phosphate. The protein is Mannosyl-3-phosphoglycerate phosphatase of Escherichia coli (strain K12 / DH10B).